A 358-amino-acid chain; its full sequence is 3-isopropylmalate dehydrogenase (358 aa).

77-90 is an NAD(+) binding site; it reads GPKWTHLPPDQQPE. Substrate is bound by residues Arg-98, Arg-108, Arg-137, and Asp-226. 3 residues coordinate Mg(2+): Asp-226, Asp-250, and Asp-254. Residue 284–296 coordinates NAD(+); the sequence is GSAPDIAGKGIAN.

It belongs to the isocitrate and isopropylmalate dehydrogenases family. LeuB type 1 subfamily. As to quaternary structure, homodimer. Requires Mg(2+) as cofactor. Mn(2+) serves as cofactor.

The protein localises to the cytoplasm. It carries out the reaction (2R,3S)-3-isopropylmalate + NAD(+) = 4-methyl-2-oxopentanoate + CO2 + NADH. It functions in the pathway amino-acid biosynthesis; L-leucine biosynthesis; L-leucine from 3-methyl-2-oxobutanoate: step 3/4. Its function is as follows. Catalyzes the oxidation of 3-carboxy-2-hydroxy-4-methylpentanoate (3-isopropylmalate) to 3-carboxy-4-methyl-2-oxopentanoate. The product decarboxylates to 4-methyl-2 oxopentanoate. This is 3-isopropylmalate dehydrogenase from Mannheimia succiniciproducens (strain KCTC 0769BP / MBEL55E).